Reading from the N-terminus, the 351-residue chain is Peptide chain release factor 1 (351 aa).

Gln233 carries the N5-methylglutamine modification.

It belongs to the prokaryotic/mitochondrial release factor family. In terms of processing, methylated by PrmC. Methylation increases the termination efficiency of RF1.

It is found in the cytoplasm. Peptide chain release factor 1 directs the termination of translation in response to the peptide chain termination codons UAG and UAA. The protein is Peptide chain release factor 1 (prfA) of Treponema pallidum (strain Nichols).